A 98-amino-acid polypeptide reads, in one-letter code: Acylphosphatase (98 aa).

The Acylphosphatase-like domain maps to 12 to 98 (RLSAWVHGHV…DATMTGFSER (87 aa)). Active-site residues include Arg27 and Asn45.

The protein belongs to the acylphosphatase family.

The catalysed reaction is an acyl phosphate + H2O = a carboxylate + phosphate + H(+). In Mycolicibacterium smegmatis (strain ATCC 700084 / mc(2)155) (Mycobacterium smegmatis), this protein is Acylphosphatase (acyP).